Reading from the N-terminus, the 784-residue chain is MTKKLALKRKGKESEPINKVVASSEASENEEEEEDLLQAVKDPGEDSTDDEGIDQEYHSDSSEELQFESDEEGNYLGRKQSSSAEEDEESSDEDDDGEEESSDEEEVEDEEKDSKLKQSDDKPSSSGAASKKAPTTELSKRDTSKPEYQDSDTSDEEDIRNTVGNIPMHWYDEYKHIGYDWDAKKIIKPPQGDQIDEFLRKIEDPDFWRTVKDPLTGQDVRLTDEDIALIKRIVSGRIPNKDHEEYEPWIEWFTSEVEKMPIKNVPDHKRSFLPSVSEKKRVSRMVHALKMGWMKTTEEVEREKQAKRGPKFYMLWETDTSREHMRRIHDPVSAPKRDLPGHAESYNPPPEYLFDAKETKEWLKLKDEPHKRKLHFMPQKFKSLREVPAYSRYLRERFLRCLDLYLCPRAKRVKLNIDAEYLIPKLPSPRDLQPFPTVESMVYRGHTDLVRSVSVEPKGEYLVSGSDDKTVKIWEIATGRCIRTIETDEVVRCVAWCPNPKLSIIAVATGNRLLLVNPKVGDKVLVKKTDDLLAEAPSQDVIESERIKTAVQWSNAEADEQEKGVRVVITHFKPIRQVTWHGRGDYLATVMPEGANRSALIHQLSKRRSQIPFSKSKGLIQFVLFHPVKPCFFVATQHNIRIYDLVKQELVKKLLTNSKWISGMSIHPKGDNLLVSTYDKKMLWFDLDLSTKPYQTMRLHRNAVRSVAFHLRYPLFASGSDDQAVIVSHGMVYNDLLQNPLIVPLKKLQTHEKRDEFGVLDVNWHPVQPWVFSTGADSTIRLYT.

The span at 1–11 shows a compositional bias: basic residues; the sequence is MTKKLALKRKG. Residues 1-159 form a disordered region; sequence MTKKLALKRK…DSDTSDEEDI (159 aa). Composition is skewed to acidic residues over residues 27 to 36, 45 to 54, 62 to 73, and 84 to 111; these read SENEEEEEDL, EDSTDDEGID, SEELQFESDEEG, and AEED…EDEE. The segment covering 112–123 has biased composition (basic and acidic residues); the sequence is KDSKLKQSDDKP. Low complexity predominate over residues 124-133; the sequence is SSSGAASKKA. Positions 138–148 are enriched in basic and acidic residues; that stretch reads LSKRDTSKPEY. The span at 149-158 shows a compositional bias: acidic residues; the sequence is QDSDTSDEED. WD repeat units follow at residues 445–486, 488–526, 570–612, 615–653, 656–695, 699–738, and 754–784; these read GHTD…RTIE, DEVV…KVLV, THFK…SQIP, KSKG…LVKK, TNSK…KPYQ, LHRN…DLLQ, and RDEF…RLYT.

This sequence belongs to the WD repeat BOP1/ERB1 family.

It localises to the nucleus. The protein resides in the nucleolus. Its subcellular location is the nucleoplasm. Functionally, required for maturation of ribosomal RNAs and formation of the large ribosomal subunit. The protein is Ribosome biogenesis protein BOP1 homolog of Drosophila erecta (Fruit fly).